A 158-amino-acid polypeptide reads, in one-letter code: EOLA-like protein (158 aa).

An ASCH domain is found at 6–92 (LSFRQPYAGF…IAGLVDIGET (87 aa)).

Belongs to the EOLA family.

The protein is EOLA-like protein of Pongo abelii (Sumatran orangutan).